Here is a 476-residue protein sequence, read N- to C-terminus: 3-isopropylmalate dehydratase large subunit (476 aa).

The [4Fe-4S] cluster site is built by C353, C413, and C416.

The protein belongs to the aconitase/IPM isomerase family. LeuC type 1 subfamily. As to quaternary structure, heterodimer of LeuC and LeuD. [4Fe-4S] cluster serves as cofactor.

It carries out the reaction (2R,3S)-3-isopropylmalate = (2S)-2-isopropylmalate. It participates in amino-acid biosynthesis; L-leucine biosynthesis; L-leucine from 3-methyl-2-oxobutanoate: step 2/4. Catalyzes the isomerization between 2-isopropylmalate and 3-isopropylmalate, via the formation of 2-isopropylmaleate. In Yersinia enterocolitica serotype O:8 / biotype 1B (strain NCTC 13174 / 8081), this protein is 3-isopropylmalate dehydratase large subunit.